The sequence spans 753 residues: 5-methyltetrahydropteroyltriglutamate--homocysteine methyltransferase (753 aa).

5-methyltetrahydropteroyltri-L-glutamate-binding positions include 17-20 and lysine 117; that span reads RELK. Residues 431–433 and glutamate 484 contribute to the L-homocysteine site; that span reads IGS. L-methionine contacts are provided by residues 431 to 433 and glutamate 484; that span reads IGS. 5-methyltetrahydropteroyltri-L-glutamate contacts are provided by residues 515-516 and tryptophan 561; that span reads RC. Aspartate 599 serves as a coordination point for L-homocysteine. Position 599 (aspartate 599) interacts with L-methionine. Glutamate 605 contacts 5-methyltetrahydropteroyltri-L-glutamate. The Zn(2+) site is built by histidine 641, cysteine 643, and glutamate 665. The Proton donor role is filled by histidine 694. Cysteine 726 is a Zn(2+) binding site.

It belongs to the vitamin-B12 independent methionine synthase family. The cofactor is Zn(2+).

The enzyme catalyses 5-methyltetrahydropteroyltri-L-glutamate + L-homocysteine = tetrahydropteroyltri-L-glutamate + L-methionine. Its pathway is amino-acid biosynthesis; L-methionine biosynthesis via de novo pathway; L-methionine from L-homocysteine (MetE route): step 1/1. Its function is as follows. Catalyzes the transfer of a methyl group from 5-methyltetrahydrofolate to homocysteine resulting in methionine formation. This Escherichia coli O6:K15:H31 (strain 536 / UPEC) protein is 5-methyltetrahydropteroyltriglutamate--homocysteine methyltransferase.